The primary structure comprises 470 residues: MGVPTSDWIYWCRLCARDDVVYKVRERDDDLVRIISKCFDVEMTLEEPELGSMLCEECYSVIGQLITFSDSVSKVQAIFELLRHSEPQDSQDLDALRLEYGLPPACKQDLEFLDIDDTEDRCSLVEELTISDHSTSPSPDFEAQTVRTRANLKQCNSDPKVLASPTASIPEVETKRSRRQQFAAKRNSKVYTATESDDEEAILDEDEAVSPPPLKRKRGRPKGSGKQKNVDDSDNVTSREPDDNAKSKQDDKTSELSMSPHGSQSSNFVDYPCKICNETFMSFMALRRHKHDMHGGPKKYVCDHCGKGLKTFTSLVEHQLVHTEEKPCICPVCNAGFKNKARLRVHSQTHGEPKFECNVCGKKLQTRAILNKHKYVHTDERRFKCEVCGSGCKNSTALKIHLLGHTGLRPYVCKYCGKAFASNTNCRSHKWKKHPELASKEDETESSRVPVPTLEELRAITREMAKAKQD.

The tract at residues 1–103 (MGVPTSDWIY…DALRLEYGLP (103 aa)) is required for homodimerization. One can recognise a ZAD domain in the interval 10–82 (YWCRLCARDD…SKVQAIFELL (73 aa)). Cys-12, Cys-15, Cys-55, and Cys-58 together coordinate Zn(2+). Residues 156–265 (NSDPKVLASP…LSMSPHGSQS (110 aa)) are disordered. Phosphoserine is present on Ser-168. Residues 195–208 (ESDDEEAILDEDEA) show a composition bias toward acidic residues. Residues 214–225 (LKRKRGRPKGSG) show a composition bias toward basic residues. Over residues 237–254 (TSREPDDNAKSKQDDKTS) the composition is skewed to basic and acidic residues. Polar residues predominate over residues 255–265 (ELSMSPHGSQS). 6 C2H2-type zinc fingers span residues 271 to 294 (YPCK…HDMH), 300 to 322 (YVCD…QLVH), 328 to 350 (CICP…SQTH), 355 to 377 (FECN…KYVH), 383 to 405 (FKCE…LLGH), and 411 to 434 (YVCK…WKKH).

In terms of assembly, homodimer. Interacts with Myd88 and Toll.

It localises to the cell membrane. Functionally, acts as an adapter to assemble/stabilize a Toll/wek/Myd88/tube complex; required for efficient recruitment of Myd88 to Toll. Dispensable for innate immune response; plays a minimal role, if any, in the immune defense against Gram-positive bacteria and fungi. Involved in dorsoventral axis determination. This is Zinc finger protein weckle from Drosophila melanogaster (Fruit fly).